A 248-amino-acid polypeptide reads, in one-letter code: 3-deoxy-manno-octulosonate cytidylyltransferase 2 (248 aa).

It belongs to the KdsB family.

It localises to the cytoplasm. The catalysed reaction is 3-deoxy-alpha-D-manno-oct-2-ulosonate + CTP = CMP-3-deoxy-beta-D-manno-octulosonate + diphosphate. Its pathway is nucleotide-sugar biosynthesis; CMP-3-deoxy-D-manno-octulosonate biosynthesis; CMP-3-deoxy-D-manno-octulosonate from 3-deoxy-D-manno-octulosonate and CTP: step 1/1. It functions in the pathway bacterial outer membrane biogenesis; lipopolysaccharide biosynthesis. In terms of biological role, activates KDO (a required 8-carbon sugar) for incorporation into bacterial lipopolysaccharide in Gram-negative bacteria. The polypeptide is 3-deoxy-manno-octulosonate cytidylyltransferase 2 (Hydrogenovibrio crunogenus (strain DSM 25203 / XCL-2) (Thiomicrospira crunogena)).